We begin with the raw amino-acid sequence, 225 residues long: NAD(P)H-quinone oxidoreductase subunit K, chloroplastic (225 aa).

The [4Fe-4S] cluster site is built by Cys43, Cys44, Cys108, and Cys139.

It belongs to the complex I 20 kDa subunit family. As to quaternary structure, NDH is composed of at least 16 different subunits, 5 of which are encoded in the nucleus. The cofactor is [4Fe-4S] cluster.

Its subcellular location is the plastid. The protein localises to the chloroplast thylakoid membrane. The catalysed reaction is a plastoquinone + NADH + (n+1) H(+)(in) = a plastoquinol + NAD(+) + n H(+)(out). It carries out the reaction a plastoquinone + NADPH + (n+1) H(+)(in) = a plastoquinol + NADP(+) + n H(+)(out). NDH shuttles electrons from NAD(P)H:plastoquinone, via FMN and iron-sulfur (Fe-S) centers, to quinones in the photosynthetic chain and possibly in a chloroplast respiratory chain. The immediate electron acceptor for the enzyme in this species is believed to be plastoquinone. Couples the redox reaction to proton translocation, and thus conserves the redox energy in a proton gradient. This Hordeum vulgare (Barley) protein is NAD(P)H-quinone oxidoreductase subunit K, chloroplastic.